A 286-amino-acid chain; its full sequence is Undecaprenyl-diphosphatase (286 aa).

Helical transmembrane passes span 5 to 25 (WFII…FLPV), 55 to 75 (IDAF…VLYW), 92 to 112 (SGFK…VLGL), 122 to 142 (LFNP…MIFA), 185 to 205 (IIGA…SFFL), 229 to 249 (MHIV…LIVV), and 264 to 284 (FAMY…FNVI).

The protein belongs to the UppP family.

It localises to the cell membrane. It catalyses the reaction di-trans,octa-cis-undecaprenyl diphosphate + H2O = di-trans,octa-cis-undecaprenyl phosphate + phosphate + H(+). Functionally, catalyzes the dephosphorylation of undecaprenyl diphosphate (UPP). Confers resistance to bacitracin. This chain is Undecaprenyl-diphosphatase, found in Clostridium novyi (strain NT).